A 153-amino-acid polypeptide reads, in one-letter code: MSSFKSQCEIIIDKPAHVVYDFVTTVSNWIGIHPACKGIEGDDGLDKEATVGLRFTETIDVRGWVFQCHWEVRKMVKDQYFEFSLPTDFILPPVYNTIITYIFDPIGDNKTRFIRTMINCTNADATPEQKADFADTDMHTDYLNAVKARLEMS.

It functions in the pathway secondary metabolite biosynthesis. Its function is as follows. Part of the gene cluster that mediates the biosynthesis of the indole diterpenes penitrems. The geranylgeranyl diphosphate (GGPP) synthase ptmG catalyzes the first step in penitrem biosynthesis via conversion of farnesyl pyrophosphate and isopentyl pyrophosphate into geranylgeranyl pyrophosphate (GGPP). Condensation of indole-3-glycerol phosphate with GGPP by the prenyl transferase ptmC then forms 3-geranylgeranylindole (3-GGI). Epoxidation by the FAD-dependent monooxygenase ptmM leads to a epoxidized-GGI that is substrate of the terpene cyclase ptmB for cyclization to yield paspaline. Paspaline is subsequently converted to 13-desoxypaxilline by the cytochrome P450 monooxygenase ptmP, the latter being then converted to paxilline by the cytochrome P450 monooxygenase ptmQ. Paxilline is converted to beta-paxitriol via C-10 ketoreduction by the short-chain dehydrogenase ptmH which can be monoprenylated at the C-20 by the indole diterpene prenyltransferase ptmD. A two-step elimination (acetylation and elimination) process performed by the O-acetyltransferase ptmV and ptmI leads to the production of the prenylated form of penijanthine. The FAD-linked oxidoreductase ptmO then converts the prenylated form of penijanthine into PC-M5 which is in turn transformed into PC-M4 by the aromatic dimethylallyltransferase ptmE. Five sequential oxidative transformations performed by the cytochrome P450 monooxygenases ptmK, ptmU, ptmL, ptmN and ptmJ yield the various penitrem compounds. PtmK, ptmU and ptmM are involved in the formation of the key bicyclic ring of penitrem C via the formation of the intermediates secopenitrem D and penitrem D. PtmL catalyzes the epoxidation of penitrem D and C to yield penitrem B and F, respectively. PtmJ catalyzes the last benzylic hydroxylation to convert penitrem B to prenitrem E and penitrem F to penitrem A. In Penicillium ochrochloron, this protein is Penitrem biosynthesis cluster 1 protein I.